We begin with the raw amino-acid sequence, 259 residues long: MLPSTSVNSPAQGNGVLSSRDAARHTAGAKRYKYLRRLFRFRQMDFEFAAWQMLYLFTSPQRVYRNFHYRKQTKDQWARDDPAFLVLLSIWLCVSTIGFGFVLDMGFFETIKLLLWVVFIDCVGVGLLISTLMWFISNKYLVKRQSRDYDVEWGYAFDVHLNAFYPLLVILHFIQLFFINHVILTDTFIGYLVGNTLWLVAVGYYIYVTFLGYSALPFLKNTVILLYPFAPLILLYGLSLALGWNFTHTLCSFYKYRVK.

Met-1 carries the post-translational modification N-acetylmethionine. Residues 1-17 (MLPSTSVNSPAQGNGVL) are compositionally biased toward polar residues. Positions 1–22 (MLPSTSVNSPAQGNGVLSSRDA) are disordered. At 1–82 (MLPSTSVNSP…TKDQWARDDP (82 aa)) the chain is on the cytoplasmic side. Ser-6 is modified (phosphoserine). A helical transmembrane segment spans residues 83 to 103 (AFLVLLSIWLCVSTIGFGFVL). Residues 104 to 115 (DMGFFETIKLLL) lie on the Lumenal side of the membrane. A helical membrane pass occupies residues 116-136 (WVVFIDCVGVGLLISTLMWFI). Residues 137-163 (SNKYLVKRQSRDYDVEWGYAFDVHLNA) lie on the Cytoplasmic side of the membrane. The helical transmembrane segment at 164–184 (FYPLLVILHFIQLFFINHVIL) threads the bilayer. The Lumenal portion of the chain corresponds to 185–187 (TDT). Residues 188 to 208 (FIGYLVGNTLWLVAVGYYIYV) traverse the membrane as a helical segment. The Cytoplasmic portion of the chain corresponds to 209 to 222 (TFLGYSALPFLKNT). A helical transmembrane segment spans residues 223-243 (VILLYPFAPLILLYGLSLALG). The Lumenal portion of the chain corresponds to 244–259 (WNFTHTLCSFYKYRVK).

It belongs to the unc-50 family.

Its subcellular location is the nucleus inner membrane. It localises to the golgi apparatus membrane. Involved in the cell surface expression of neuronal nicotinic receptors. Binds RNA. In Bos taurus (Bovine), this protein is Protein unc-50 homolog (UNC50).